Consider the following 275-residue polypeptide: 4-hydroxy-tetrahydrodipicolinate reductase (275 aa).

NAD(+) is bound by residues 13-18 (GAAGKM), 108-110 (GTT), and 134-137 (VPNF). The active-site Proton donor/acceptor is H164. H165 contacts (S)-2,3,4,5-tetrahydrodipicolinate. Catalysis depends on K168, which acts as the Proton donor. 174 to 175 (GT) is a binding site for (S)-2,3,4,5-tetrahydrodipicolinate.

The protein belongs to the DapB family.

The protein localises to the cytoplasm. The enzyme catalyses (S)-2,3,4,5-tetrahydrodipicolinate + NAD(+) + H2O = (2S,4S)-4-hydroxy-2,3,4,5-tetrahydrodipicolinate + NADH + H(+). It carries out the reaction (S)-2,3,4,5-tetrahydrodipicolinate + NADP(+) + H2O = (2S,4S)-4-hydroxy-2,3,4,5-tetrahydrodipicolinate + NADPH + H(+). It functions in the pathway amino-acid biosynthesis; L-lysine biosynthesis via DAP pathway; (S)-tetrahydrodipicolinate from L-aspartate: step 4/4. Catalyzes the conversion of 4-hydroxy-tetrahydrodipicolinate (HTPA) to tetrahydrodipicolinate. This Gloeothece citriformis (strain PCC 7424) (Cyanothece sp. (strain PCC 7424)) protein is 4-hydroxy-tetrahydrodipicolinate reductase.